We begin with the raw amino-acid sequence, 788 residues long: Cadherin-10 (788 aa).

An N-terminal signal peptide occupies residues 1–22 (MTIYQFLRLFVLWACLPHFCCP). The propeptide occupies 23–54 (ELTFRRTPGIQQMTAESRAPRSDGKILHRQKR). The Extracellular portion of the chain corresponds to 23 to 613 (ELTFRRTPGI…LLPAGLSTGA (591 aa)). 5 consecutive Cadherin domains span residues 56–160 (WMWN…EPTF), 161–269 (PEEI…PPRF), 270–384 (PQNT…PPVF), 385–489 (SRSS…APQF), and 489–603 (FAVF…AEAL). N-linked (GlcNAc...) asparagine glycosylation occurs at asparagine 256. N-linked (GlcNAc...) asparagine glycans are attached at residues asparagine 456 and asparagine 534. Residues 614-634 (LIAILLCIIILLVIVVLFAAL) form a helical membrane-spanning segment. Over 635 to 788 (KRQRKKEPLI…YGGGESDKDA (154 aa)) the chain is Cytoplasmic. Serine 784 carries the phosphoserine modification.

It is found in the cell membrane. Functionally, cadherins are calcium-dependent cell adhesion proteins. They preferentially interact with themselves in a homophilic manner in connecting cells; cadherins may thus contribute to the sorting of heterogeneous cell types. This is Cadherin-10 (Cdh10) from Mus musculus (Mouse).